Consider the following 1363-residue polypeptide: Clustered mitochondria protein homolog (1363 aa).

TPR repeat units lie at residues 29–63 (LPSFFNVGDDYLTIPSSYEENIADLKQALNIIVLC) and 120–154 (KEKSYNLASIYEQISRFREVIGLHYIDRLSNDIGS). The interval 172–191 (KEAKKEESTEKEQQEKEELS) is disordered. One copy of the TPR 3 repeat lies at 283-316 (STINFNPTIKINEKGKFNKSYLLYDLVCQLSPLF). Residues 361–631 (DLSRSQLSSL…RTTPRDIEFI (271 aa)) enclose the Clu domain. The segment at 521-544 (PVITSPTTDAEGKNEAEEPESEPV) is disordered. The TPR 4 repeat unit spans residues 548-581 (VYGLSSDGSRILEDKSFEEPLKQIGDFFHLKPHK). Residues 799 to 832 (AKAEKKREEEKEKEEKEATESEDKKEKKEDKEDA) show a composition bias toward basic and acidic residues. The disordered stretch occupies residues 799–844 (AKAEKKREEEKEKEEKEATESEDKKEKKEDKEDAEKEEAEAEEEVP). Over residues 833 to 842 (EKEEAEAEEE) the composition is skewed to acidic residues. TPR repeat units follow at residues 1057–1090 (VEEIYSNARSHLVQGNKEMGMALFNELLAINESI), 1141–1174 (ITAYMNSAYYESSNEQYLNSLKLYKEAMNTWSLV), 1183–1216 (INTLTNLSESLLKIKAYDSALELLQEALEITKKL), and 1225–1258 (GFIYYRIANIVVTLNKFKESKELFDKAYDIFMKL). The disordered stretch occupies residues 1291–1363 (QQETQKKSKT…SGSKKSNKKK (73 aa)). A compositionally biased stretch (polar residues) spans 1330–1342 (PPQSNPEIANQSI).

This sequence belongs to the CLU family. As to quaternary structure, may associate with the eukaryotic translation initiation factor 3 (eIF-3) complex.

It is found in the cytoplasm. In terms of biological role, mRNA-binding protein involved in proper cytoplasmic distribution of mitochondria. This chain is Clustered mitochondria protein homolog, found in Candida albicans (strain SC5314 / ATCC MYA-2876) (Yeast).